We begin with the raw amino-acid sequence, 269 residues long: Chymotrypsin-like elastase family member 2A (269 aa).

Residues 1-16 (MIRALLLSTLVAGALS) form the signal peptide. Positions 17-28 (CGLPANLPQLPR) are cleaved as a propeptide — activation peptide. One can recognise a Peptidase S1 domain in the interval 29 to 267 (VVGGEDARPN…YIDWINSVIA (239 aa)). A disulfide bond links cysteine 58 and cysteine 74. Active-site charge relay system residues include histidine 73 and aspartate 121. 3 disulfide bridges follow: cysteine 155/cysteine 222, cysteine 186/cysteine 202, and cysteine 212/cysteine 243. Serine 216 (charge relay system) is an active-site residue.

The protein belongs to the peptidase S1 family. Elastase subfamily. As to quaternary structure, interacts with CPA1. Interacts with SERPINA1. Pancreas.

The protein localises to the secreted. It catalyses the reaction Preferential cleavage: Leu-|-Xaa, Met-|-Xaa and Phe-|-Xaa. Hydrolyzes elastin.. Functionally, elastase that enhances insulin signaling and might have a physiologic role in cellular glucose metabolism. Circulates in plasma and reduces platelet hyperactivation, triggers both insulin secretion and degradation, and increases insulin sensitivity. The polypeptide is Chymotrypsin-like elastase family member 2A (CELA2A) (Sus scrofa (Pig)).